The following is an 88-amino-acid chain: MNIFGVGLPEVTVILILALLIFGPKKLPELGKQLGKTLKSLKKASNEFQNEIDQVMKEEDKDESPKSIESNQSNEINQEKIDSENSNN.

The chain crosses the membrane as a helical span at residues 3-23 (IFGVGLPEVTVILILALLIFG). Residues 56–66 (MKEEDKDESPK) show a composition bias toward basic and acidic residues. The segment at 56–88 (MKEEDKDESPKSIESNQSNEINQEKIDSENSNN) is disordered. Residues 67 to 76 (SIESNQSNEI) show a composition bias toward polar residues. A compositionally biased stretch (basic and acidic residues) spans 77 to 88 (NQEKIDSENSNN).

Belongs to the TatA/E family. As to quaternary structure, forms a complex with TatC.

The protein localises to the cell inner membrane. In terms of biological role, part of the twin-arginine translocation (Tat) system that transports large folded proteins containing a characteristic twin-arginine motif in their signal peptide across membranes. TatA could form the protein-conducting channel of the Tat system. The sequence is that of Sec-independent protein translocase protein TatA from Prochlorococcus marinus (strain MIT 9301).